The sequence spans 118 residues: Large ribosomal subunit protein eL18 (118 aa).

Belongs to the eukaryotic ribosomal protein eL18 family.

This chain is Large ribosomal subunit protein eL18, found in Sulfurisphaera tokodaii (strain DSM 16993 / JCM 10545 / NBRC 100140 / 7) (Sulfolobus tokodaii).